Consider the following 73-residue polypeptide: Large ribosomal subunit protein bL31 (73 aa).

This sequence belongs to the bacterial ribosomal protein bL31 family. Type A subfamily. Part of the 50S ribosomal subunit.

Functionally, binds the 23S rRNA. The chain is Large ribosomal subunit protein bL31 from Bartonella tribocorum (strain CIP 105476 / IBS 506).